The sequence spans 311 residues: L-lactate dehydrogenase 2 (311 aa).

NAD(+) contacts are provided by valine 14, aspartate 35, and arginine 40. Arginine 90 is a binding site for substrate. NAD(+) contacts are provided by residues serine 103, 120 to 122, and threonine 145; that span reads ATN. Substrate is bound at residue 122–125; sequence NPCD. Residue 150–153 participates in substrate binding; that stretch reads DTTR. Histidine 177 (proton acceptor) is an active-site residue. Threonine 230 serves as a coordination point for substrate.

This sequence belongs to the LDH/MDH superfamily. LDH family. Homotetramer.

The protein resides in the cytoplasm. The catalysed reaction is (S)-lactate + NAD(+) = pyruvate + NADH + H(+). Its pathway is fermentation; pyruvate fermentation to lactate; (S)-lactate from pyruvate: step 1/1. Its function is as follows. Catalyzes the conversion of lactate to pyruvate. This chain is L-lactate dehydrogenase 2, found in Listeria monocytogenes serotype 4b (strain F2365).